Consider the following 548-residue polypeptide: Chaperonin GroEL (548 aa).

Residues 30 to 33, Lys-51, 87 to 91, Gly-415, and Asp-495 each bind ATP; these read TLGP and DGTTT.

Belongs to the chaperonin (HSP60) family. In terms of assembly, forms a cylinder of 14 subunits composed of two heptameric rings stacked back-to-back. Interacts with the co-chaperonin GroES.

The protein resides in the cytoplasm. The enzyme catalyses ATP + H2O + a folded polypeptide = ADP + phosphate + an unfolded polypeptide.. Functionally, together with its co-chaperonin GroES, plays an essential role in assisting protein folding. The GroEL-GroES system forms a nano-cage that allows encapsulation of the non-native substrate proteins and provides a physical environment optimized to promote and accelerate protein folding. This chain is Chaperonin GroEL, found in Erwinia tasmaniensis (strain DSM 17950 / CFBP 7177 / CIP 109463 / NCPPB 4357 / Et1/99).